Reading from the N-terminus, the 78-residue chain is UPF0270 protein ECA4061 (78 aa).

Belongs to the UPF0270 family.

In Pectobacterium atrosepticum (strain SCRI 1043 / ATCC BAA-672) (Erwinia carotovora subsp. atroseptica), this protein is UPF0270 protein ECA4061.